Here is a 350-residue protein sequence, read N- to C-terminus: Leucine-rich repeat-containing protein 58 (350 aa).

10 LRR repeats span residues 14–34 (NLTH…NKRK), 35–56 (DVQQ…VASF), 58–80 (HLHL…LGLT), 81–102 (KLKT…KEMG), 105–125 (RLEV…QFLQ), 128–149 (TLKS…IENL), 151–173 (SLEF…ANLP), 174–195 (YLSY…LAQV), 197–218 (SLRS…ILSL), and 220–240 (HLHE…RDLT).

In Xenopus laevis (African clawed frog), this protein is Leucine-rich repeat-containing protein 58 (lrrc58).